Reading from the N-terminus, the 494-residue chain is Tetracenomycin biosynthesis bifunctional cyclase/O-methyl transferase TcmN (494 aa).

Residues 11–140 are polyketide cyclase; that stretch reads VNAPFELVWD…TTTRANMERI (130 aa). Catalysis depends on Ser-67, which acts as the Proton acceptor; for cyclase activity. Residues Arg-69 and Arg-82 each act as proton donor; for cyclase activity in the active site. Residues 169 to 494 form a methyltransferase region; it reads LLLAASGRLA…TWTTLECRPV (326 aa). S-adenosyl-L-methionine contacts are provided by residues Asp-358 and 384–386; that span reads GDF. His-405 acts as the Proton acceptor; for methyltransferase activity in catalysis.

This sequence in the C-terminal section; belongs to the class I-like SAM-binding methyltransferase superfamily. Cation-independent O-methyltransferase family. The tetracenomycin polyketide synthase (TCM PKS) is composed of a ketosynthase complex (TcmKL), an acyl carrier protein (TcmM), a cyclase (TcmN) and a probable second cyclase (TcmJ). TcmN is a homodimer in solution.

It carries out the reaction 10 malonyl-CoA + 8 H(+) = tetracenomycin F2 + 10 CO2 + 10 CoA + 2 H2O. Its pathway is antibiotic biosynthesis; tetracenomycin C biosynthesis. Its function is as follows. Involved in the biosynthesis of tetracenomycin C (TCM C). Part of a type II polyketide synthase (PKS) that catalyzes the synthesis of tetracenomycin F2 (TCM F2), a precursor of TCM C, from malonyl-CoA. The TcmN N-terminal domain, when coupled with the other components of the PKS, catalyzes the cyclization and aromatization of the linear polyketide intermediate. Catalyzes the cyclization of the first and second rings. In addition, the C-terminal domain acts as a methyltransferase. It catalyzes the specific O-methylation of tetracenomycin D3 (TCM D3) to TCM B3, using S-adenosyl-L-methionine as the methyl donor. The sequence is that of Tetracenomycin biosynthesis bifunctional cyclase/O-methyl transferase TcmN from Streptomyces glaucescens.